We begin with the raw amino-acid sequence, 246 residues long: Ribonuclease 3 (246 aa).

The RNase III domain occupies 20–145 (FSKLEKILGF…FVGAIYLDRG (126 aa)). Glu62 provides a ligand contact to Mg(2+). Residue Asp66 is part of the active site. Mg(2+)-binding residues include Asn131 and Glu134. The active site involves Glu134. The region spanning 173 to 241 (SYKSLLIEWC…SKRGYFVFQS (69 aa)) is the DRBM domain.

It belongs to the ribonuclease III family. Homodimer. The cofactor is Mg(2+).

It localises to the cytoplasm. The enzyme catalyses Endonucleolytic cleavage to 5'-phosphomonoester.. Its function is as follows. Digests double-stranded RNA. Involved in the processing of primary rRNA transcript to yield the immediate precursors to the large and small rRNAs (23S and 16S). Processes some mRNAs, and tRNAs when they are encoded in the rRNA operon. Processes pre-crRNA and tracrRNA of type II CRISPR loci if present in the organism. The protein is Ribonuclease 3 of Flavobacterium psychrophilum (strain ATCC 49511 / DSM 21280 / CIP 103535 / JIP02/86).